Reading from the N-terminus, the 1664-residue chain is Peroxisome proliferator-activated receptor gamma coactivator-related protein 1 (1664 aa).

7 disordered regions span residues 1-44 (MAAR…GTLG), 167-255 (LLTL…VASF), 436-555 (PVVP…EGPL), 681-701 (VDPV…VSSA), 735-793 (IESG…ADIP), 818-873 (CLVP…PTPP), and 1045-1068 (HGAP…HPKH). Residues 12-22 (APPPSGGPGPD) are compositionally biased toward pro residues. A compositionally biased stretch (gly residues) spans 23–32 (PGGGARGSGW). Residues 201-224 (SLPDPSWDFSPPSFLETSSPKLPS) are compositionally biased toward low complexity. At Ser-237 the chain carries Phosphoserine. A necessary for interaction with CREB1 and NRF1 and for transcriptional coactivation region spans residues 433 to 467 (VVEPVVPKEPQNPPANAAPGSQRARKGRKKKSKEQ). Over residues 455–464 (RARKGRKKKS) the composition is skewed to basic residues. Residues 482-499 (SSRGQSTVGTEVTSQVDN) show a composition bias toward polar residues. The segment covering 522–531 (RAWARAWAAA) has biased composition (low complexity). Residues 533-549 (ENSSPKNLERSAGQSSP) show a composition bias toward polar residues. A phosphoserine mark is found at Ser-536 and Ser-548. The segment covering 823–836 (GPSPASPSPEPPVS) has biased composition (pro residues). Residues 862-873 (VQSVSPAVPTPP) are compositionally biased toward low complexity. Ser-1076 bears the Phosphoserine mark. Disordered regions lie at residues 1093–1130 (EEPA…STVP), 1182–1209 (SEAK…DIPQ), and 1334–1528 (VLSL…DHYQ). Residues 1096–1113 (ASERLKPETQETRPREKP) are compositionally biased toward basic and acidic residues. The span at 1365-1383 (PSAPCLAPSSLLSPEASPC) shows a compositional bias: low complexity. The segment at 1379–1450 (EASPCRNDMN…SSSSSSSSSS (72 aa)) is necessary for interaction with CREB1 and NRF1. Positions 1400 to 1409 (RSMRCYRKAC) are enriched in basic residues. 2 positions are modified to phosphoserine: Ser-1411 and Ser-1413. 2 stretches are compositionally biased toward low complexity: residues 1427–1459 (SRSV…RSLS) and 1468–1500 (SSCS…SSSR). The span at 1501-1519 (SRSRSPSPRRRSDRRRRYS) shows a compositional bias: basic residues. The 77-residue stretch at 1543–1619 (RVVFIGKIPG…QPFDLCFGGR (77 aa)) folds into the RRM domain.

In terms of assembly, interacts with CREB1 and NRF1. Strongly expressed in heart and skeletal muscle, moderately in lung, placenta, intestine, liver, kidney, spleen, thymus, colon and brain. Also expressed in several oncocytic thyroid tumors.

Its subcellular location is the nucleus. Acts as a coactivator during transcriptional activation of nuclear genes related to mitochondrial biogenesis and cell growth. Involved in the transcription coactivation of CREB and NRF1 target genes. The protein is Peroxisome proliferator-activated receptor gamma coactivator-related protein 1 (PPRC1) of Homo sapiens (Human).